The sequence spans 573 residues: Protein phosphatase EYA3 (573 aa).

Position 1 is an N-acetylmethionine (Met-1). Disordered stretches follow at residues 1 to 46 (MEEE…LASN) and 236 to 296 (TYQS…DATS). Residues 20–46 (SGEQTISQVSNPDVSDQKPETSSLASN) are compositionally biased toward polar residues. Positions 254–271 (LSSGDPSTSPSLSQTTPS) are enriched in low complexity. A phosphoserine mark is found at Ser-262 and Ser-266. Asp-309 (nucleophile) is an active-site residue. 2 residues coordinate Mg(2+): Asp-309 and Asp-311. Asp-311 functions as the Proton donor in the catalytic mechanism. A phosphoserine mark is found at Ser-438 and Ser-472. Asp-537 lines the Mg(2+) pocket.

It belongs to the HAD-like hydrolase superfamily. EYA family. As to quaternary structure, interacts with SIX1 and DACH1, and probably SIX2, SIX4, SIX5. Requires Mg(2+) as cofactor. Post-translationally, ser-266 phosphorylation is required for localization at sites of DNA damage and directing interaction with H2AX.

It localises to the cytoplasm. It is found in the nucleus. It carries out the reaction O-phospho-L-tyrosyl-[protein] + H2O = L-tyrosyl-[protein] + phosphate. In terms of biological role, tyrosine phosphatase that specifically dephosphorylates 'Tyr-142' of histone H2AX (H2AXY142ph). 'Tyr-142' phosphorylation of histone H2AX plays a central role in DNA repair and acts as a mark that distinguishes between apoptotic and repair responses to genotoxic stress. Promotes efficient DNA repair by dephosphorylating H2AX, promoting the recruitment of DNA repair complexes containing MDC1. Its function as histone phosphatase probably explains its role in transcription regulation during organogenesis. Coactivates SIX1, and seems to coactivate SIX2, SIX4 and SIX5. The repression of precursor cell proliferation in myoblasts by SIX1 is switched to activation through recruitment of EYA3 to the SIX1-DACH1 complex and seems to be dependent on EYA3 phosphatase activity. May be involved in development of the eye. In Homo sapiens (Human), this protein is Protein phosphatase EYA3 (EYA3).